Reading from the N-terminus, the 96-residue chain is Co-chaperonin GroES (96 aa).

The protein belongs to the GroES chaperonin family. In terms of assembly, heptamer of 7 subunits arranged in a ring. Interacts with the chaperonin GroEL.

The protein localises to the cytoplasm. Its function is as follows. Together with the chaperonin GroEL, plays an essential role in assisting protein folding. The GroEL-GroES system forms a nano-cage that allows encapsulation of the non-native substrate proteins and provides a physical environment optimized to promote and accelerate protein folding. GroES binds to the apical surface of the GroEL ring, thereby capping the opening of the GroEL channel. This Thiobacillus denitrificans (strain ATCC 25259 / T1) protein is Co-chaperonin GroES.